The primary structure comprises 74 residues: Exodeoxyribonuclease 7 small subunit (74 aa).

This sequence belongs to the XseB family. In terms of assembly, heterooligomer composed of large and small subunits.

The protein resides in the cytoplasm. The catalysed reaction is Exonucleolytic cleavage in either 5'- to 3'- or 3'- to 5'-direction to yield nucleoside 5'-phosphates.. Functionally, bidirectionally degrades single-stranded DNA into large acid-insoluble oligonucleotides, which are then degraded further into small acid-soluble oligonucleotides. In Actinobacillus pleuropneumoniae serotype 5b (strain L20), this protein is Exodeoxyribonuclease 7 small subunit.